The following is an 865-amino-acid chain: Lactose regulatory protein LAC9 (865 aa).

The segment covering 1–15 (MGSRASNSPSFSSKA) has biased composition (polar residues). The tract at residues 1 to 87 (MGSRASNSPS…NNNNNNNKKS (87 aa)) is disordered. Basic and acidic residues predominate over residues 22–34 (EYKKNAVKKETIR). Over residues 67 to 85 (SNGNKNDSNANNNNNNNNK) the composition is skewed to low complexity. Zn(2+) contacts are provided by C95, C98, C105, C112, C115, and C122. Residues 95–122 (CDACRKKKWKCSKTVPTCTNCLKYNLDC) constitute a DNA-binding region (zn(2)-C6 fungal-type). Residues 818-840 (LQSSTTQMRPPTTSGWPDTNNFL) form a disordered region.

It localises to the nucleus. In terms of biological role, positive regulatory protein, that controls induction of the lactose-galactose regulation of Kluyveromyces lactis. The chain is Lactose regulatory protein LAC9 (LAC9) from Kluyveromyces lactis (strain ATCC 8585 / CBS 2359 / DSM 70799 / NBRC 1267 / NRRL Y-1140 / WM37) (Yeast).